We begin with the raw amino-acid sequence, 261 residues long: UPF0328 protein ECU02_0020/ECU04_1700 (261 aa).

The tract at residues 1–20 (MSITSIPQPHETNEQHHTEI) is disordered. A compositionally biased stretch (basic and acidic residues) spans 11–20 (ETNEQHHTEI).

Belongs to the UPF0328 family.

The chain is UPF0328 protein ECU02_0020/ECU04_1700 from Encephalitozoon cuniculi (strain GB-M1) (Microsporidian parasite).